A 428-amino-acid chain; its full sequence is Enolase 1 (428 aa).

Positions 38 to 58 (EVPSGASTGENEAVELRDGGS) are disordered. (2R)-2-phosphoglycerate is bound at residue Gln163. Catalysis depends on Glu205, which acts as the Proton donor. Asp242, Glu286, and Asp313 together coordinate Mg(2+). (2R)-2-phosphoglycerate contacts are provided by Lys338, Arg367, Ser368, and Lys389. Catalysis depends on Lys338, which acts as the Proton acceptor.

It belongs to the enolase family. The cofactor is Mg(2+).

It is found in the cytoplasm. Its subcellular location is the secreted. It localises to the cell surface. It carries out the reaction (2R)-2-phosphoglycerate = phosphoenolpyruvate + H2O. Its pathway is carbohydrate degradation; glycolysis; pyruvate from D-glyceraldehyde 3-phosphate: step 4/5. In terms of biological role, catalyzes the reversible conversion of 2-phosphoglycerate (2-PG) into phosphoenolpyruvate (PEP). It is essential for the degradation of carbohydrates via glycolysis. The sequence is that of Enolase 1 from Lactobacillus gasseri (strain ATCC 33323 / DSM 20243 / BCRC 14619 / CIP 102991 / JCM 1131 / KCTC 3163 / NCIMB 11718 / NCTC 13722 / AM63).